Reading from the N-terminus, the 1755-residue chain is Transposon Ty1-DR1 Gag-Pol polyprotein (1755 aa).

Polar residues-rich tracts occupy residues 1-10, 48-60, and 127-152; these read MESQQLSNYP, TKAN…TPAS, and QSQF…GNTF. Disordered regions lie at residues 1–93, 126–173, and 352–421; these read MESQ…MMTQ, PQSQ…RPPP, and GSRN…SKST. The span at 153–165 shows a compositional bias: low complexity; that stretch reads TDSSSADSDMTST. The tract at residues 299 to 401 is RNA-binding; it reads NNGIHINNKV…NSKSKTARAH (103 aa). Residues 402 to 418 are compositionally biased toward low complexity; it reads NVSTSNNSPSTDNDSIS. Position 416 is a phosphoserine (Ser-416). The active-site For protease activity; shared with dimeric partner is Asp-461. Residues 583–640 form an integrase-type zinc finger-like region; it reads NVHTSESTRKYPYPFIHRMLAHANAQTIRYSLKNNTITYFNESDVDWSSAIDYQCPDC. Positions 660–835 constitute an Integrase catalytic domain; the sequence is NSYEPFQYLH…AGLDISTLLP (176 aa). Residues Asp-671 and Asp-736 each coordinate Mg(2+). Disordered stretches follow at residues 956–1087, 1092–1111, and 1130–1187; these read SKAV…ETEK, RSPS…NIVP, and DLPL…DNET. The span at 960 to 969 shows a compositional bias: low complexity; the sequence is SPTDSTPPST. The span at 1005–1015 shows a compositional bias: polar residues; it reads STPQISNIEST. Over residues 1038 to 1053 the composition is skewed to basic and acidic residues; the sequence is ESSHASKSKDFRHSDS. Composition is skewed to polar residues over residues 1054–1082 and 1101–1111; these read YSEN…QISD and PENNSSHNIVP. The Bipartite nuclear localization signal motif lies at 1178 to 1212; sequence KKRSLEDNETEIKVSRDTWNTKNMRSLEPPRSKKR. The 139-residue stretch at 1338–1476 folds into the Reverse transcriptase Ty1/copia-type domain; sequence NNYYITQLDI…DILGLEIKYQ (139 aa). The Mg(2+) site is built by Asp-1346, Asp-1427, Asp-1428, Asp-1610, Glu-1652, and Asp-1685. In terms of domain architecture, RNase H Ty1/copia-type spans 1610 to 1752; sequence DASYGNQPYY…IKTFKLLTNK (143 aa).

The capsid protein forms a homotrimer, from which the VLPs are assembled. The protease is a homodimer, whose active site consists of two apposed aspartic acid residues. Initially, virus-like particles (VLPs) are composed of the structural unprocessed proteins Gag and Gag-Pol, and also contain the host initiator methionine tRNA (tRNA(i)-Met) which serves as a primer for minus-strand DNA synthesis, and a dimer of genomic Ty RNA. Processing of the polyproteins occurs within the particle and proceeds by an ordered pathway, called maturation. First, the protease (PR) is released by autocatalytic cleavage of the Gag-Pol polyprotein yielding capsid protein p45 and a Pol-p154 precursor protein. This cleavage is a prerequisite for subsequent processing of Pol-p154 at the remaining sites to release the mature structural and catalytic proteins. Maturation takes place prior to the RT reaction and is required to produce transposition-competent VLPs.

Its subcellular location is the cytoplasm. It is found in the nucleus. The catalysed reaction is DNA(n) + a 2'-deoxyribonucleoside 5'-triphosphate = DNA(n+1) + diphosphate. It catalyses the reaction Endonucleolytic cleavage to 5'-phosphomonoester.. In terms of biological role, capsid protein (CA) is the structural component of the virus-like particle (VLP), forming the shell that encapsulates the retrotransposons dimeric RNA genome. The particles are assembled from trimer-clustered units and there are holes in the capsid shells that allow for the diffusion of macromolecules. CA also has nucleocapsid-like chaperone activity, promoting primer tRNA(i)-Met annealing to the multipartite primer-binding site (PBS), dimerization of Ty1 RNA and initiation of reverse transcription. The aspartyl protease (PR) mediates the proteolytic cleavages of the Gag and Gag-Pol polyproteins after assembly of the VLP. Functionally, reverse transcriptase/ribonuclease H (RT) is a multifunctional enzyme that catalyzes the conversion of the retro-elements RNA genome into dsDNA within the VLP. The enzyme displays a DNA polymerase activity that can copy either DNA or RNA templates, and a ribonuclease H (RNase H) activity that cleaves the RNA strand of RNA-DNA heteroduplexes during plus-strand synthesis and hydrolyzes RNA primers. The conversion leads to a linear dsDNA copy of the retrotransposon that includes long terminal repeats (LTRs) at both ends. Its function is as follows. Integrase (IN) targets the VLP to the nucleus, where a subparticle preintegration complex (PIC) containing at least integrase and the newly synthesized dsDNA copy of the retrotransposon must transit the nuclear membrane. Once in the nucleus, integrase performs the integration of the dsDNA into the host genome. The chain is Transposon Ty1-DR1 Gag-Pol polyprotein (TY1B-DR1) from Saccharomyces cerevisiae (strain ATCC 204508 / S288c) (Baker's yeast).